A 252-amino-acid polypeptide reads, in one-letter code: 2-succinyl-6-hydroxy-2,4-cyclohexadiene-1-carboxylate synthase (252 aa).

This sequence belongs to the AB hydrolase superfamily. MenH family. Monomer.

It catalyses the reaction 5-enolpyruvoyl-6-hydroxy-2-succinyl-cyclohex-3-ene-1-carboxylate = (1R,6R)-6-hydroxy-2-succinyl-cyclohexa-2,4-diene-1-carboxylate + pyruvate. It participates in quinol/quinone metabolism; 1,4-dihydroxy-2-naphthoate biosynthesis; 1,4-dihydroxy-2-naphthoate from chorismate: step 3/7. Its pathway is quinol/quinone metabolism; menaquinone biosynthesis. In terms of biological role, catalyzes a proton abstraction reaction that results in 2,5-elimination of pyruvate from 2-succinyl-5-enolpyruvyl-6-hydroxy-3-cyclohexene-1-carboxylate (SEPHCHC) and the formation of 2-succinyl-6-hydroxy-2,4-cyclohexadiene-1-carboxylate (SHCHC). The chain is 2-succinyl-6-hydroxy-2,4-cyclohexadiene-1-carboxylate synthase from Escherichia coli O8 (strain IAI1).